The primary structure comprises 605 residues: MSQLSSTLKRYTESARYTDAHYAKSGYGAYTPSSYGANLAASLLEKEKLGFKPVPTSSFLTRPRTYGPSSLLDYDRGRPLLRPDITGGGKRAESQTRGTERPLGSGLSGGSGFPYGVTNNCLSYLPINAYDQGVTLTQKLDSQSDLARDFSSLRTSDSYRIDPRNLGRSPMLARTRKELCTLQGLYQTASCPEYLVDYLENYGRKGSASQVPSQAPPSRVPEIISPTYRPIGRYTLWETGKGQAPGPSRSSSPGRDGMNSKSAQGLAGLRNLGNTCFMNSILQCLSNTRELRDYCLQRLYMRDLHHGSNAHTALVEEFAKLIQTIWTSSPNDVVSPSEFKTQIQRYAPRFVGYNQQDAQEFLRFLLDGLHNEVNRVTLRPKSNPENLDHLPDDEKGRQMWRKYLEREDSRIGDLFVGQLKSSLTCTDCGYCSTVFDPFWDLSLPIAKRGYPEVTLMDCMRLFTKEDVLDGDEKPTCCRCRGRKRCIKKFSIQRFPKILVLHLKRFSESRIRTSKLTTFVNFPLRDLDLREFASENTNHAVYNLYAVSNHSGTTMGGHYTAYCRSPGTGEWHTFNDSSVTPMSSSQVRTSDAYLLFYELASPPSRM.

The tract at residues 1–200 (MSQLSSTLKR…CPEYLVDYLE (200 aa)) is necessary for interaction with MDM4. Disordered stretches follow at residues 71 to 107 (LLDY…GSGL) and 237 to 264 (WETG…KSAQ). Basic and acidic residues predominate over residues 90-100 (KRAESQTRGTE). A compositionally biased stretch (low complexity) spans 245 to 255 (PGPSRSSSPGR). Residues 267–599 (AGLRNLGNTC…DAYLLFYELA (333 aa)) enclose the USP domain. The Nucleophile role is filled by Cys-276. The tract at residues 403-503 (YLEREDSRIG…FPKILVLHLK (101 aa)) is necessary for interaction with MDM4. Zn(2+)-binding residues include Cys-425, Cys-428, Cys-476, and Cys-479. His-557 (proton acceptor) is an active-site residue.

The protein belongs to the peptidase C19 family. USP2 subfamily. In terms of assembly, homooligomer. Found in trimeric complex with MDM2 and MDM4 and USP2. Interacts with CCND1; the interaction is direct and promotes its stabilization by antagonizing ubiquitin-dependent degradation. Interacts (via N-terminus and C-terminus) with MDM2. Interacts with MDM4. Interacts with PER1. Interacts with KCNQ1; counteracts the NEDD4L-specific down-regulation of I(Ks) and restore plasma membrane localization of KCNQ1. Isoform 4: Interacts with NHERF4 and CLTC. Expressed in mesangial cells of the kidney and in different types of glomerulonephritides (at protein level).

The protein localises to the cytoplasm. The protein resides in the perinuclear region. It is found in the nucleus. It localises to the membrane. It carries out the reaction Thiol-dependent hydrolysis of ester, thioester, amide, peptide and isopeptide bonds formed by the C-terminal Gly of ubiquitin (a 76-residue protein attached to proteins as an intracellular targeting signal).. Cleavage is inhibited by ubiquitin in a dosage-dependent manner. Cleavage is blocked by ubiquitin aldehyde. Functionally, hydrolase that deubiquitinates polyubiquitinated target proteins such as MDM2, MDM4 and CCND1. Isoform 1 and isoform 4 possess both ubiquitin-specific peptidase and isopeptidase activities. Deubiquitinates MDM2 without reversing MDM2-mediated p53/TP53 ubiquitination and thus indirectly promotes p53/TP53 degradation and limits p53 activity. Has no deubiquitinase activity against p53/TP53. Prevents MDM2-mediated degradation of MDM4. Plays a role in the G1/S cell-cycle progression in normal and cancer cells. Regulates the circadian clock by modulating its intrinsic circadian rhythm and its capacity to respond to external cues. Associates with clock proteins and deubiquitinates core clock component PER1 but does not affect its overall stability. Regulates the nucleocytoplasmic shuttling and nuclear retention of PER1 and its repressive role on the clock transcription factors CLOCK and BMAL1. Plays a role in the regulation of myogenic differentiation of embryonic muscle cells. Circadian clock output effector that regulates Ca(2+) absorption in the small intestine. Probably functions by regulating protein levels of the membrane scaffold protein NHERF4 in a rhythmic manner, and is therefore likely to control Ca(2+) membrane permeability mediated by the Ca(2+) channel TRPV6 in the intestine. In Homo sapiens (Human), this protein is Ubiquitin carboxyl-terminal hydrolase 2 (USP2).